The sequence spans 351 residues: UDP-3-O-acylglucosamine N-acyltransferase (351 aa).

His-240 (proton acceptor) is an active-site residue.

The protein belongs to the transferase hexapeptide repeat family. LpxD subfamily. In terms of assembly, homotrimer.

The catalysed reaction is a UDP-3-O-[(3R)-3-hydroxyacyl]-alpha-D-glucosamine + a (3R)-hydroxyacyl-[ACP] = a UDP-2-N,3-O-bis[(3R)-3-hydroxyacyl]-alpha-D-glucosamine + holo-[ACP] + H(+). It functions in the pathway bacterial outer membrane biogenesis; LPS lipid A biosynthesis. In terms of biological role, catalyzes the N-acylation of UDP-3-O-acylglucosamine using 3-hydroxyacyl-ACP as the acyl donor. Is involved in the biosynthesis of lipid A, a phosphorylated glycolipid that anchors the lipopolysaccharide to the outer membrane of the cell. The polypeptide is UDP-3-O-acylglucosamine N-acyltransferase (Pseudomonas fluorescens (strain SBW25)).